The following is a 553-amino-acid chain: T-complex protein 1 subunit eta (553 aa).

An ADP-binding site is contributed by glycine 41. Glycine 41 is a binding site for ATP. Aspartate 92 provides a ligand contact to Mg(2+). ADP is bound by residues glycine 93, threonine 94, threonine 95, serine 96, serine 164, and serine 165. Residue glycine 93 participates in ATP binding. Position 96 (serine 96) interacts with ATP. Arginine 398 and glycine 409 together coordinate ATP. Residues glycine 409, glutamate 494, and arginine 499 each contribute to the ADP site. Arginine 499 serves as a coordination point for ATP. A disordered region spans residues 523–553 (PRSTVDAPPGGRGRGRGQTPQPLRPRSVALS). Residues 539–553 (GQTPQPLRPRSVALS) show a composition bias toward low complexity.

Component of the chaperonin-containing T-complex (TRiC), a hexadecamer composed of two identical back-to-back stacked rings enclosing a protein folding chamber. Each ring is made up of eight different subunits: TCP1/CCT1, CCT2, CCT3, CCT4, CCT5, CCT6A/CCT6, CCT7, CCT8.

It localises to the cytoplasm. The catalysed reaction is ATP + H2O = ADP + phosphate + H(+). In terms of biological role, component of the chaperonin-containing T-complex (TRiC), a molecular chaperone complex that assists the folding of actin, tubulin and other proteins upon ATP hydrolysis. The protein is T-complex protein 1 subunit eta of Gallus gallus (Chicken).